The following is a 374-amino-acid chain: MPNPLPLVFDAPRRAKPPRHFADLDATARAAAVAELGLPAFRAKQLATQYYGRLTADPQQMTDLPAAVREQVAEALFPDLLTAVREIETDAGETRKVLWRAVDGTTFESVLMRYSDRNTVCISSQAGCGMACPFCATGQGGLQRNLSTAEILEQVRAAAVELRDRDGEGIAPAARGGRLSNIVFMGMGEPLANYNRVIAAVRRIVAPPPDGFGISARSVTVSTVGLAPAIRKLADERLNVTLALSLHAPDDELRDTLVPVNNRWKVSEALDAARYYADVTGRRVSIEYALIRDVNDQPWRADLLGKRLHGALGPLVHVNVIPLNPTPGSEWDASPKPAEREFVRRVRERGVSCTVRDTRGREIAAACGQLAAEG.

Glu-108 serves as the catalytic Proton acceptor. A Radical SAM core domain is found at 114–361; that stretch reads YSDRNTVCIS…SCTVRDTRGR (248 aa). Cys-121 and Cys-367 form a disulfide bridge. [4Fe-4S] cluster contacts are provided by Cys-128, Cys-132, and Cys-135. S-adenosyl-L-methionine contacts are provided by residues 188–189, Ser-222, 245–247, and Asn-324; these read GE and SLH. Cys-367 serves as the catalytic S-methylcysteine intermediate.

It belongs to the radical SAM superfamily. RlmN family. [4Fe-4S] cluster is required as a cofactor.

It is found in the cytoplasm. It catalyses the reaction adenosine(2503) in 23S rRNA + 2 reduced [2Fe-2S]-[ferredoxin] + 2 S-adenosyl-L-methionine = 2-methyladenosine(2503) in 23S rRNA + 5'-deoxyadenosine + L-methionine + 2 oxidized [2Fe-2S]-[ferredoxin] + S-adenosyl-L-homocysteine. The enzyme catalyses adenosine(37) in tRNA + 2 reduced [2Fe-2S]-[ferredoxin] + 2 S-adenosyl-L-methionine = 2-methyladenosine(37) in tRNA + 5'-deoxyadenosine + L-methionine + 2 oxidized [2Fe-2S]-[ferredoxin] + S-adenosyl-L-homocysteine. Specifically methylates position 2 of adenine 2503 in 23S rRNA and position 2 of adenine 37 in tRNAs. This chain is Probable dual-specificity RNA methyltransferase RlmN, found in Mycobacterium sp. (strain JLS).